A 642-amino-acid polypeptide reads, in one-letter code: Transcription factor 4 (642 aa).

Residues M1–N25 show a composition bias toward polar residues. The interval M1–R59 is essential for MYOD1 inhibition. 4 disordered regions span residues M1–G296, H311–L354, P444–N545, and K609–M642. Phosphoserine is present on residues S42, S63, and S68. 5 stretches are compositionally biased toward polar residues: residues G83–H98, G112–N130, P181–F191, G218–C230, and P241–I281. Over residues T312 to P323 the composition is skewed to low complexity. Residues N340–N349 are compositionally biased toward polar residues. Position 347 is a phosphoserine (S347). The leucine-zipper stretch occupies residues L354–L375. Composition is skewed to low complexity over residues P444–Q455 and G478–E487. The residue at position 490 (S490) is a Phosphoserine. 2 stretches are compositionally biased toward basic and acidic residues: residues K502–K517 and P530–N545. Residues E539–L592 form the bHLH domain. The tract at residues Q594–S617 is class A specific domain.

In terms of assembly, efficient DNA binding requires dimerization with another bHLH protein. Forms homo- or heterooligomers with myogenin. Interacts with HIVEP2. Interacts with NEUROD2. Interacts with AGBL1. As to expression, widely expressed.

It localises to the nucleus. Its function is as follows. Transcription factor that binds to the immunoglobulin enhancer Mu-E5/KE5-motif. Involved in the initiation of neuronal differentiation. Activates transcription by binding to the E box (5'-CANNTG-3'). Binds to the thyroglobulin promoter. This chain is Transcription factor 4 (TCF4), found in Canis lupus familiaris (Dog).